A 434-amino-acid polypeptide reads, in one-letter code: Protein phosphatase 2C 56 (434 aa).

One can recognise a PPM-type phosphatase domain in the interval 128-422 (LYGFTSICGR…DNISVVVVDL (295 aa)). Mg(2+)-binding residues include aspartate 177, aspartate 261, serine 262, aspartate 347, and aspartate 413. The Nuclear localization signal motif lies at 423 to 427 (KPRRK).

The protein belongs to the PP2C family. As to quaternary structure, interacts with SPK1, ATHB-6, CIPK15/PKS3, GPX3, SRK2E/OST1, SRK2D, SRK2I, SCAR1, SCAR2, SCAR3 and SCARL. Binds to the PA released by the phospholipase D alpha 1 (PLDALPHA1) in response to ABA during the stomatal closure regulation. Interacts with ABA-bounded PYR1, PYL1, PYL2, PYL3, PYL4, PYL5, PYL6, PYL7, PYL8, PYL9, PYL10, and with free PYL2, PYL3, PYL4 and PYL13. Binds to RPL12B, CPK21 and CPK23. Binds to MAPKKK18. Interacts with KIN10. Interacts with phosphorylated PYL8/RCAR3. The cofactor is Mg(2+). It depends on Mn(2+) as a cofactor. Expressed in seeds and seedlings. In roots, confined to lateral root caps and columella cells.

It is found in the nucleus. Its subcellular location is the cytoplasm. The protein localises to the cell membrane. The enzyme catalyses O-phospho-L-seryl-[protein] + H2O = L-seryl-[protein] + phosphate. The catalysed reaction is O-phospho-L-threonyl-[protein] + H2O = L-threonyl-[protein] + phosphate. With respect to regulation, phosphatase activity repressed by oxidized GPX3 and phosphatidic acid (PA). PA is produced by PLD alpha 1 in response to ABA. Repressed by PYR/PYL/RCAR ABA receptors in an ABA-dependent manner. In terms of biological role, key component and repressor of the abscisic acid (ABA) signaling pathway that regulates numerous ABA responses, such as stomatal closure, osmotic water permeability of the plasma membrane (Pos), drought-induced resistance and rhizogenesis, response to glucose, high light stress, seed germination and inhibition of vegetative growth. During the stomatal closure regulation, modulates the inward calcium-channel permeability as well as the actin reorganization in guard cells in response to ABA. Involved in the resistance to the bacterial pathogen Pseudomonas syringae pv. tomato. Controls negatively fibrillin expression that is involved in mediating ABA-induced photoprotection. May be involved in ABA content regulation. Plays a role in the Pro accumulation in response to reduced water availability (low water potential). Required for the ABA negative regulation of the ethylene-induced hyponastic growth. Involved in acquired thermotolerance of root growth and seedling survival. Activates/represses SRK2E/OST1 in response to ABA-dependent stimuli, especially in stomata closure regulation involving SLAC1. Represses MAPKKK18 activity and promotes MAPKKK18 degradation by the proteasome pathway upon abscisic acid (ABA) treatment. Represses KIN10 activity by the specific dephosphorylation of its T-loop Thr-198, leading to a poststress inactivation of SnRK1 signaling. Restricts MAPKKK20 activity by dephosphorylation. The polypeptide is Protein phosphatase 2C 56 (Arabidopsis thaliana (Mouse-ear cress)).